The primary structure comprises 229 residues: Potassium/proton antiporter CemA (229 aa).

3 helical membrane passes run 6–26 (AFIP…ISLC), 107–127 (ILHF…SFWG), and 189–209 (ILSG…KYWI).

The protein belongs to the CemA family.

It localises to the plastid. Its subcellular location is the chloroplast inner membrane. The catalysed reaction is K(+)(in) + H(+)(out) = K(+)(out) + H(+)(in). Its function is as follows. Contributes to K(+)/H(+) antiport activity by supporting proton efflux to control proton extrusion and homeostasis in chloroplasts in a light-dependent manner to modulate photosynthesis. Prevents excessive induction of non-photochemical quenching (NPQ) under continuous-light conditions. Indirectly promotes efficient inorganic carbon uptake into chloroplasts. The sequence is that of Potassium/proton antiporter CemA from Arabis hirsuta (Hairy rock-cress).